Reading from the N-terminus, the 212-residue chain is Thymidylate kinase (212 aa).

10–17 is an ATP binding site; it reads GPDGAGKT.

It belongs to the thymidylate kinase family.

It carries out the reaction dTMP + ATP = dTDP + ADP. Its function is as follows. Phosphorylation of dTMP to form dTDP in both de novo and salvage pathways of dTTP synthesis. The sequence is that of Thymidylate kinase from Enterococcus faecalis (strain ATCC 700802 / V583).